The primary structure comprises 309 residues: Malate dehydrogenase (309 aa).

Residues 9–14 (GAGFVG) and D33 contribute to the NAD(+) site. The substrate site is built by R82 and R88. NAD(+) contacts are provided by residues N95 and 118–120 (VNN). 2 residues coordinate substrate: N120 and R151. H175 acts as the Proton acceptor in catalysis.

It belongs to the LDH/MDH superfamily. MDH type 3 family.

It carries out the reaction (S)-malate + NAD(+) = oxaloacetate + NADH + H(+). Its function is as follows. Catalyzes the reversible oxidation of malate to oxaloacetate. The polypeptide is Malate dehydrogenase (Roseiflexus sp. (strain RS-1)).